A 679-amino-acid polypeptide reads, in one-letter code: Stress-70 protein, mitochondrial (679 aa).

The transit peptide at 1 to 46 (MISATRAAAARLVGTAASRTPAAARHQDGWNGLSHEAFRFVSRRDY) directs the protein to the mitochondrion. The segment at 1–432 (MISATRAAAA…IQGGVLAGDV (432 aa)) is interaction with NFS1. ADP is bound by residues Thr63 and Asn64. The nucleotide-binding domain (NBD) stretch occupies residues 63 to 431 (TNSCVAVMEG…AIQGGVLAGD (369 aa)). Residue Lys76 is modified to N6-acetyllysine. At Thr87 the chain carries Phosphothreonine. An N6-acetyllysine; alternate mark is found at Lys135 and Lys138. Lys135 and Lys138 each carry N6-succinyllysine; alternate. Lys143 is subject to N6-acetyllysine. Position 206 is an N6-acetyllysine; alternate (Lys206). The residue at position 206 (Lys206) is an N6-succinyllysine; alternate. An N6-malonyllysine; alternate modification is found at Lys206. 2 positions are modified to N6-acetyllysine: Lys234 and Lys288. Lys300 is modified (N6-acetyllysine; alternate). Lys300 carries the post-translational modification N6-succinyllysine; alternate. Residues Glu313, Lys316, and Ser320 each contribute to the ADP site. Lys360 is modified (N6-acetyllysine; alternate). Lys360 carries the N6-succinyllysine; alternate modification. Lys368 is subject to N6-succinyllysine. The ADP site is built by Gly388 and Arg391. An N6-succinyllysine modification is found at Lys394. Ser408 is subject to Phosphoserine. The segment at 432 to 441 (VTDVLLLDVT) is interdomain linker. Positions 432 to 679 (VTDVLLLDVT…QKEDQKEEKQ (248 aa)) are interaction with FXN and ISCU. Residues 442–679 (PLSLGIETLG…QKEDQKEEKQ (238 aa)) are substrate-binding domain (SBD). Residue Arg513 is modified to Omega-N-methylarginine. N6-acetyllysine; alternate occurs at positions 567 and 600. N6-succinyllysine; alternate occurs at positions 567 and 600. N6-succinyllysine is present on Lys610. Lys612 carries the post-translational modification N6-acetyllysine. The residue at position 646 (Lys646) is an N6-acetyllysine; alternate. An N6-succinyllysine; alternate modification is found at Lys646. Positions 656–679 (ASEREGSGSSGTGEQKEDQKEEKQ) are disordered. Residues 669–679 (EQKEDQKEEKQ) show a composition bias toward basic and acidic residues.

The protein belongs to the heat shock protein 70 family. In terms of assembly, interacts strongly with the intermediate form of FXN and weakly with its mature form. Interacts with HSCB. Associates with the mitochondrial contact site and cristae organizing system (MICOS) complex, composed of at least MICOS10/MIC10, CHCHD3/MIC19, CHCHD6/MIC25, APOOL/MIC27, IMMT/MIC60, APOO/MIC23/MIC26 and QIL1/MIC13. This complex was also known under the names MINOS or MitOS complex. The MICOS complex associates with mitochondrial outer membrane proteins SAMM50, MTX1, MTX2 and DNAJC11, mitochondrial inner membrane protein TMEM11 and with HSPA9. Interacts with DNLZ, the interaction is required to prevent self-aggregation. Interacts with TESPA1. Interacts with PDPN. Interacts with NFU1, NFS1 and ISCU. Interacts with TP53; the interaction promotes TP53 degradation. Interacts (via SBD domain) with UBXN2A; the interaction with UBXN2A inhibits HSPA9/MOT-2 interaction with and degradation of TP53, thereby promotes TP53 translocation to the nucleus. Interacts with ITPR1 AND VDAC1; this interaction couples ITPR1 to VDAC1. Component of the TIM23 mitochondrial inner membrane pre-sequence translocase complex.

It is found in the mitochondrion. It localises to the nucleus. The protein resides in the nucleolus. Its subcellular location is the cytoplasm. The protein localises to the mitochondrion matrix. The enzyme catalyses ATP + H2O = ADP + phosphate + H(+). The chaperone activity is regulated by ATP-induced allosteric coupling of the nucleotide-binding (NBD) and substrate-binding (SBD) domains. ATP binding in the NBD leads to a conformational change in the NBD, which is transferred through the interdomain linker (IDL) to the substrate-binding domain (SBD). This elicits a reduced substrate affinity and a faster substrate exchange rate. Upon hydrolysis of ATP to ADP, the protein undergoes a conformational change that increases its affinity for substrate proteins. It cycles through repeated phases of ATP hydrolysis and nucleotide exchange, facilitating repeated cycles of substrate binding and release. Functions in collaboration with co-chaperones. Functions with the co-chaperone, DNLZ, to maintain solubility and regulate ATP hydrolysis. Nucleotide exchange factors, GRPEL1 and GRPEL2, accelerate nucleotide exchange. Functionally, mitochondrial chaperone that plays a key role in mitochondrial protein import, folding, and assembly. Plays an essential role in the protein quality control system, the correct folding of proteins, the re-folding of misfolded proteins, and the targeting of proteins for subsequent degradation. These processes are achieved through cycles of ATP binding, ATP hydrolysis, and ADP release, mediated by co-chaperones. In mitochondria, it associates with the TIM (translocase of the inner membrane) protein complex to assist in the import and folding of mitochondrial proteins. Plays an important role in mitochondrial iron-sulfur cluster (ISC) biogenesis, interacts with and stabilizes ISC cluster assembly proteins FXN, NFU1, NFS1 and ISCU. Regulates erythropoiesis via stabilization of ISC assembly. Regulates mitochondrial calcium-dependent apoptosis by coupling two calcium channels, ITPR1 and VDAC1, at the mitochondria-associated endoplasmic reticulum (ER) membrane to facilitate calcium transport from the ER lumen to the mitochondria intermembrane space, providing calcium for the downstream calcium channel MCU, which releases it into the mitochondrial matrix. Although primarily located in the mitochondria, it is also found in other cellular compartments. In the cytosol, it associates with proteins involved in signaling, apoptosis, or senescence. It may play a role in cell cycle regulation via its interaction with and promotion of degradation of TP53. May play a role in the control of cell proliferation and cellular aging. Protects against reactive oxygen species (ROS). Extracellular HSPA9 plays a cytoprotective role by preventing cell lysis following immune attack by the membrane attack complex by disrupting formation of the complex. The protein is Stress-70 protein, mitochondrial of Cricetulus griseus (Chinese hamster).